Consider the following 467-residue polypeptide: tRNA-2-methylthio-N(6)-dimethylallyladenosine synthase (467 aa).

Positions 5–125 constitute an MTTase N-terminal domain; sequence RKLHIKSYGC…LPQLLAQASR (121 aa). Cys-14, Cys-50, Cys-88, Cys-166, Cys-170, and Cys-173 together coordinate [4Fe-4S] cluster. Positions 152–384 constitute a Radical SAM core domain; it reads RARGVSAFVT…QSLIDSQQAA (233 aa). The TRAM domain occupies 387-449; it reads KAAIGSVVDV…RYSLLGELVA (63 aa).

The protein belongs to the methylthiotransferase family. MiaB subfamily. As to quaternary structure, monomer. The cofactor is [4Fe-4S] cluster.

The protein localises to the cytoplasm. The catalysed reaction is N(6)-dimethylallyladenosine(37) in tRNA + (sulfur carrier)-SH + AH2 + 2 S-adenosyl-L-methionine = 2-methylsulfanyl-N(6)-dimethylallyladenosine(37) in tRNA + (sulfur carrier)-H + 5'-deoxyadenosine + L-methionine + A + S-adenosyl-L-homocysteine + 2 H(+). Its function is as follows. Catalyzes the methylthiolation of N6-(dimethylallyl)adenosine (i(6)A), leading to the formation of 2-methylthio-N6-(dimethylallyl)adenosine (ms(2)i(6)A) at position 37 in tRNAs that read codons beginning with uridine. This Bradyrhizobium sp. (strain ORS 278) protein is tRNA-2-methylthio-N(6)-dimethylallyladenosine synthase.